Here is a 236-residue protein sequence, read N- to C-terminus: 2-C-methyl-D-erythritol 4-phosphate cytidylyltransferase (236 aa).

The protein belongs to the IspD/TarI cytidylyltransferase family. IspD subfamily.

It carries out the reaction 2-C-methyl-D-erythritol 4-phosphate + CTP + H(+) = 4-CDP-2-C-methyl-D-erythritol + diphosphate. It participates in isoprenoid biosynthesis; isopentenyl diphosphate biosynthesis via DXP pathway; isopentenyl diphosphate from 1-deoxy-D-xylulose 5-phosphate: step 2/6. In terms of biological role, catalyzes the formation of 4-diphosphocytidyl-2-C-methyl-D-erythritol from CTP and 2-C-methyl-D-erythritol 4-phosphate (MEP). The sequence is that of 2-C-methyl-D-erythritol 4-phosphate cytidylyltransferase from Azoarcus sp. (strain BH72).